The chain runs to 596 residues: PDZ and LIM domain protein 5 (596 aa).

Ser2 is modified (N-acetylserine). Ser2 is modified (phosphoserine). Positions 2–85 (SNYSVSLVGP…SLNMTLQRAS (84 aa)) constitute a PDZ domain. Position 89 is an N6-acetyllysine; alternate (Lys89). Residue Lys89 is modified to N6-succinyllysine; alternate. Lys89 is covalently cross-linked (Glycyl lysine isopeptide (Lys-Gly) (interchain with G-Cter in SUMO2); alternate). 3 positions are modified to phosphoserine: Ser111, Ser134, and Ser137. 3 disordered regions span residues 121-165 (NNMA…SPSP), 196-240 (AGKT…GPPR), and 255-340 (THSD…RPGV). The span at 134–143 (SVSSPKVTSI) shows a compositional bias: polar residues. Low complexity predominate over residues 144-165 (PSPSSAFTPAHATTSSHASPSP). 2 stretches are compositionally biased toward polar residues: residues 205–219 (RQPTVTSVCSETSQE) and 226–237 (RGSQGDSKQQNG). A phosphoserine mark is found at Ser228 and Ser260. 2 stretches are compositionally biased toward basic and acidic residues: residues 258–273 (DASKKRLIEDTEDWRP) and 293–304 (EHLKESEADNTK). Polar residues predominate over residues 305–335 (KANNSQEPSPQLASSVASTRSMPESLDSPTS). Phosphoserine is present on residues Ser309, Ser313, and Ser322. Lys350 bears the N6-acetyllysine mark. The segment at 354–381 (STGVIKSPSWQRPNQGVPSTGRISNSAT) is disordered. A phosphoserine mark is found at Ser360 and Ser362. Residues 361-381 (PSWQRPNQGVPSTGRISNSAT) are compositionally biased toward polar residues. LIM zinc-binding domains lie at 418–477 (PMCA…FFAP), 477–536 (PECG…LFGT), and 536–596 (TICH…SVNF).

As to quaternary structure, interacts with various PKC isoforms through the LIM domains. Interacts with actin and alpha-actinin through the PDZ domain. Interacts (via LIM domains) with SIPA1L1/SPAR; this interaction may occur preferentially with isoform 1. Heart and skeletal muscle specific. Expression is commonly increased in the brain of patients with bipolar disorder, schizophrenia, and major depression.

Its subcellular location is the postsynaptic density. The protein localises to the presynapse. It localises to the postsynapse. The protein resides in the cytoplasm. It is found in the cytosol. Its function is as follows. May play an important role in the heart development by scaffolding PKC to the Z-disk region. May play a role in the regulation of cardiomyocyte expansion. Isoforms lacking the LIM domains may negatively modulate the scaffolding activity of isoform 1. Overexpression promotes the development of heart hypertrophy. Contributes to the regulation of dendritic spine morphogenesis in neurons. May be required to restrain postsynaptic growth of excitatory synapses. Isoform 1, but not isoform 2, expression favors spine thinning and elongation. The protein is PDZ and LIM domain protein 5 of Homo sapiens (Human).